The sequence spans 199 residues: MSSGNAKIGHPAPNFKATAVMPDGQFKDISLSDYKGKYVVFFFYPLDFTFVCPTEIIAFSDRAEEFKKINCQVIGASVDSHFCHLAWINTPKKQGGLGPMNIPLVSDPKRTIAQDYGVLKADEGISFRGLFIIDDKGILRQITVNDLPVGRSVDETLRLVQAFQFTDKHGEVCPAGWKPGSDTIKPDVQKSKEYFSKQK.

S2 bears the N-acetylserine mark. The Thioredoxin domain occupies 6–165 (AKIGHPAPNF…TLRLVQAFQF (160 aa)). The residue at position 7 (K7) is an N6-acetyllysine; alternate. A Glycyl lysine isopeptide (Lys-Gly) (interchain with G-Cter in SUMO2); alternate cross-link involves residue K7. N6-acetyllysine occurs at positions 16 and 27. Position 32 is a phosphoserine (S32). K35 carries the post-translational modification N6-acetyllysine; alternate. At K35 the chain carries N6-succinyllysine; alternate. The Cysteine sulfenic acid (-SOH) intermediate role is filled by C52. A Phosphothreonine modification is found at T90. Residue K120 forms a Glycyl lysine isopeptide (Lys-Gly) (interchain with G-Cter in SUMO2) linkage. K136 carries the post-translational modification N6-acetyllysine. A disordered region spans residues 176-199 (GWKPGSDTIKPDVQKSKEYFSKQK). Residues 184-199 (IKPDVQKSKEYFSKQK) show a composition bias toward basic and acidic residues. Residue K185 forms a Glycyl lysine isopeptide (Lys-Gly) (interchain with G-Cter in SUMO1) linkage. N6-acetyllysine is present on K197.

The protein belongs to the peroxiredoxin family. AhpC/Prx1 subfamily. Homodimer; disulfide-linked, upon oxidation. 5 homodimers assemble to form a ring-like decamer. Interacts with GDPD5; forms a mixed-disulfide with GDPD5. Interacts with SESN1 and SESN2. Interacts with FAM107A. Phosphorylated on Thr-90 during the M-phase, which leads to a decrease in enzymatic activity. Post-translationally, acetylation increases reducing activity and resistance to superoxidation. Deacetylated by HDAC6 which decreases reducing activity. As to expression, detected in heart and skeletal muscle (at protein level).

The protein localises to the cytoplasm. The catalysed reaction is a hydroperoxide + [thioredoxin]-dithiol = an alcohol + [thioredoxin]-disulfide + H2O. Functionally, thiol-specific peroxidase that catalyzes the reduction of hydrogen peroxide and organic hydroperoxides to water and alcohols, respectively. Plays a role in cell protection against oxidative stress by detoxifying peroxides and as sensor of hydrogen peroxide-mediated signaling events. Might participate in the signaling cascades of growth factors and tumor necrosis factor-alpha by regulating the intracellular concentrations of H(2)O(2). Reduces an intramolecular disulfide bond in GDPD5 that gates the ability to GDPD5 to drive postmitotic motor neuron differentiation. The chain is Peroxiredoxin-1 (PRDX1) from Myotis lucifugus (Little brown bat).